We begin with the raw amino-acid sequence, 360 residues long: Inward rectifier potassium channel 13 (360 aa).

Residues 1-50 (MDSSNCKVIAPLLSQRYRRMVTKDGHSTLQMDGAQRGLAYLRDAWGILMD) are Cytoplasmic-facing. A helical membrane pass occupies residues 51–77 (MRWRWMMLVFSASFVVHWLVFAVLWYV). The Extracellular portion of the chain corresponds to 78–105 (LAEMNGDLELDHDAPPENHTICVKYITS). Positions 106-122 (FTAAFSFSLETQLTIGY) form an intramembrane region, helical; Pore-forming. Residues 119-124 (TIGYGT) carry the Selectivity filter motif. Residues 123–131 (GTMFPSGDC) lie on the Extracellular side of the membrane. The chain crosses the membrane as a helical span at residues 132-157 (PSAIALLAIQMLLGLMLEAFITGAFV). Topologically, residues 158–360 (AKIARPKNRA…FQISETGLTE (203 aa)) are cytoplasmic. Phosphoserine; by PKC is present on serine 201. Serine 287 carries the post-translational modification Phosphoserine; by PKA.

This sequence belongs to the inward rectifier-type potassium channel (TC 1.A.2.1) family. KCNJ13 subfamily. Homotetramer. Interacts with RAB28; the interaction may facilitate cone outer segments phagocytosis. Phosphorylation at Ser-201 by PKC strongly inhibits ionic currents, while phosphorylation at Ser-287 by PKA increases them. As to expression, predominantly expressed in small intestine. Expression is also detected in stomach, kidney, and all central nervous system regions tested with the exception of spinal cord.

The protein localises to the membrane. Its subcellular location is the cell membrane. The enzyme catalyses K(+)(in) = K(+)(out). Inhibited by Ba(2+) and Cs(+), although sensitivity to those inhibitors is much lower than in other Kir channels. Its function is as follows. Inward rectifier potassium channels are characterized by a greater tendency to allow potassium to flow into the cell rather than out of it. Their voltage dependence is regulated by the concentration of extracellular potassium; as external potassium is raised, the voltage range of the channel opening shifts to more positive voltages. The inward rectification is mainly due to the blockage of outward current by internal magnesium. KCNJ13 has a very low single channel conductance, low sensitivity to block by external barium and cesium, and no dependence of its inward rectification properties on the internal blocking particle magnesium. This chain is Inward rectifier potassium channel 13 (KCNJ13), found in Homo sapiens (Human).